Here is a 1032-residue protein sequence, read N- to C-terminus: Exportin-T (1032 aa).

The protein belongs to the exportin family.

The protein localises to the nucleus. The protein resides in the cytoplasm. In terms of biological role, tRNA nucleus export receptor which facilitates tRNA translocation across the nuclear pore complex. Involved in pre-tRNA splicing, probably by affecting the interaction of pre-tRNA with splicing endonuclease. This Aspergillus fumigatus (strain ATCC MYA-4609 / CBS 101355 / FGSC A1100 / Af293) (Neosartorya fumigata) protein is Exportin-T (los1).